We begin with the raw amino-acid sequence, 224 residues long: 7-cyano-7-deazaguanine synthase 1 (224 aa).

10–20 (LSGGLDSMVCA) lines the ATP pocket. 4 residues coordinate Zn(2+): Cys189, Cys199, Cys202, and Cys205.

It belongs to the QueC family. The cofactor is Zn(2+).

It carries out the reaction 7-carboxy-7-deazaguanine + NH4(+) + ATP = 7-cyano-7-deazaguanine + ADP + phosphate + H2O + H(+). Its pathway is purine metabolism; 7-cyano-7-deazaguanine biosynthesis. In terms of biological role, catalyzes the ATP-dependent conversion of 7-carboxy-7-deazaguanine (CDG) to 7-cyano-7-deazaguanine (preQ(0)). This chain is 7-cyano-7-deazaguanine synthase 1, found in Sphingopyxis alaskensis (strain DSM 13593 / LMG 18877 / RB2256) (Sphingomonas alaskensis).